Here is a 445-residue protein sequence, read N- to C-terminus: Tubulin beta-4 chain (445 aa).

Glutamine 11, glutamate 69, serine 138, glycine 142, threonine 143, glycine 144, asparagine 204, and asparagine 226 together coordinate GTP. Glutamate 69 contributes to the Mg(2+) binding site. Residues 421-445 form a disordered region; that stretch reads EYQQYQDATADEEYDEEEEEERDAE. Residues 429 to 445 show a composition bias toward acidic residues; sequence TADEEYDEEEEEERDAE.

Belongs to the tubulin family. As to quaternary structure, dimer of alpha and beta chains. A typical microtubule is a hollow water-filled tube with an outer diameter of 25 nm and an inner diameter of 15 nM. Alpha-beta heterodimers associate head-to-tail to form protofilaments running lengthwise along the microtubule wall with the beta-tubulin subunit facing the microtubule plus end conferring a structural polarity. Microtubules usually have 13 protofilaments but different protofilament numbers can be found in some organisms and specialized cells. It depends on Mg(2+) as a cofactor.

It is found in the cytoplasm. It localises to the cytoskeleton. In terms of biological role, tubulin is the major constituent of microtubules, a cylinder consisting of laterally associated linear protofilaments composed of alpha- and beta-tubulin heterodimers. Microtubules grow by the addition of GTP-tubulin dimers to the microtubule end, where a stabilizing cap forms. Below the cap, tubulin dimers are in GDP-bound state, owing to GTPase activity of alpha-tubulin. The protein is Tubulin beta-4 chain (TUBB4) of Triticum aestivum (Wheat).